Reading from the N-terminus, the 175-residue chain is Calcineurin subunit B (175 aa).

EF-hand domains follow at residues 21-56 (AEIE…SANP), 58-88 (AKRI…FSGR), 90-125 (ETDA…MVGT), and 131-166 (QLQQ…TEVI). 20 residues coordinate Ca(2+): Asp-34, Asp-36, Ser-38, Ser-40, Glu-45, Asp-66, Asp-68, Ser-70, Asp-72, Glu-77, Asp-103, Asp-105, Asp-107, Tyr-109, Glu-114, Asp-144, Asp-146, Asp-148, Lys-150, and Glu-155.

This sequence belongs to the calcineurin regulatory subunit family. As to quaternary structure, composed of a catalytic subunit (A) and a regulatory subunit (B).

Its function is as follows. Regulatory subunit of calcineurin, a calcium-dependent, calmodulin stimulated protein phosphatase. Confers calcium sensitivity. The sequence is that of Calcineurin subunit B (CNB1) from Kluyveromyces lactis (strain ATCC 8585 / CBS 2359 / DSM 70799 / NBRC 1267 / NRRL Y-1140 / WM37) (Yeast).